A 222-amino-acid polypeptide reads, in one-letter code: UPF0173 metal-dependent hydrolase Nther_2337 (222 aa).

This sequence belongs to the UPF0173 family.

The polypeptide is UPF0173 metal-dependent hydrolase Nther_2337 (Natranaerobius thermophilus (strain ATCC BAA-1301 / DSM 18059 / JW/NM-WN-LF)).